A 1014-amino-acid polypeptide reads, in one-letter code: Probable sucrose-phosphate synthase 5 (1014 aa).

Composition is skewed to basic and acidic residues over residues 29 to 41 and 49 to 58; these read RRLE…REAA and EGEKDGKPDT. Disordered regions lie at residues 29–108 and 648–677; these read RRLE…SDEE and QLLR…SSEP.

The protein belongs to the glycosyltransferase 1 family. Homodimer or homotetramer. Expressed in germinating seeds.

The enzyme catalyses beta-D-fructose 6-phosphate + UDP-alpha-D-glucose = sucrose 6(F)-phosphate + UDP + H(+). It functions in the pathway glycan biosynthesis; sucrose biosynthesis; sucrose from D-fructose 6-phosphate and UDP-alpha-D-glucose: step 1/2. Activity is regulated by phosphorylation and moderated by concentration of metabolites and light. Plays a role in photosynthetic sucrose synthesis by catalyzing the rate-limiting step of sucrose biosynthesis from UDP-glucose and fructose- 6-phosphate. Involved in the regulation of carbon partitioning in the leaves of plants. May regulate the synthesis of sucrose and therefore play a major role as a limiting factor in the export of photoassimilates out of the leaf. Plays a role for sucrose availability that is essential for plant growth and fiber elongation. The polypeptide is Probable sucrose-phosphate synthase 5 (SPS5) (Oryza sativa subsp. japonica (Rice)).